The following is a 379-amino-acid chain: Cytochrome b (379 aa).

Helical transmembrane passes span 32–52, 76–98, 111–131, and 177–197; these read YGSL…VLAT, WLLR…LHIG, VWNI…LGYV, and FFAL…LHIF. His-82 and His-96 together coordinate heme b. The heme b site is built by His-181 and His-195. His-200 contributes to the a ubiquinone binding site. 4 helical membrane passes run 223–243, 287–304, 320–340, and 348–367; these read YSVK…VFTL, LGGV…FLFS, LARL…WLGS, and NEVA…TMCA.

Belongs to the cytochrome b family. As to quaternary structure, the main subunits of complex b-c1 are: cytochrome b, cytochrome c1 and the Rieske protein. Heme b serves as cofactor.

It is found in the mitochondrion inner membrane. Component of the ubiquinol-cytochrome c reductase complex (complex III or cytochrome b-c1 complex) that is part of the mitochondrial respiratory chain. The b-c1 complex mediates electron transfer from ubiquinol to cytochrome c. Contributes to the generation of a proton gradient across the mitochondrial membrane that is then used for ATP synthesis. The protein is Cytochrome b (mt:Cyt-b) of Brachionus plicatilis (Marine rotifer).